Here is a 370-residue protein sequence, read N- to C-terminus: MANKLIGEMGLHTKISNIFAARNIITAKDALSMTEFELMELLDVGMKEIRSAISFISEATSPPCQSARSLLEKKVENEHLSGHLPTHLKGLDDTLCGGIPFGVLTELVGPPGIGKSQFCMKLALSASFPVAYGGLDGRVIYIDVESKFSSRRVIEMGLESFPEVFHLKGMAQEMAGRILVLRPTSLANFTESIQELKNSILQNQVKLLVIDSMTALLSGENKPGAQRQPQLGWHISFLKSLAEFSRIPIVVTNQVRSQNRDETSQYSFQAKVKDEFKDNTKTYDSHLVAALGINWAHAVTIRLVLEAKSGQRIIKVAKSPMSPPLAFPFHITSAGISLLSDNGTELKGPGINTIHARGHSDMINFHGDCS.

Residue 109–116 (GPPGIGKS) coordinates ATP.

Belongs to the RecA family. RAD51 subfamily. Preferentially expressed in flower buds and roots.

The protein resides in the nucleus. Functionally, may be involved in the homologous recombination repair (HRR) pathway of double-stranded DNA breaks arising during DNA replication or induced by DNA-damaging agents. The chain is DNA repair protein RAD51 homolog 2 (RAD51B) from Arabidopsis thaliana (Mouse-ear cress).